A 325-amino-acid chain; its full sequence is Probable tRNA pseudouridine synthase B (325 aa).

Catalysis depends on Asp-69, which acts as the Nucleophile. The PUA domain occupies 236 to 311; that stretch reads LPKIVIKDSA…IAADIQRVMM (76 aa).

Belongs to the pseudouridine synthase TruB family. Type 2 subfamily.

The enzyme catalyses uridine(55) in tRNA = pseudouridine(55) in tRNA. Functionally, could be responsible for synthesis of pseudouridine from uracil-55 in the psi GC loop of transfer RNAs. The protein is Probable tRNA pseudouridine synthase B of Archaeoglobus fulgidus (strain ATCC 49558 / DSM 4304 / JCM 9628 / NBRC 100126 / VC-16).